The primary structure comprises 616 residues: Hemagglutinin-neuraminidase (616 aa).

Topologically, residues 1–26 (MDRAVSQVALENDEREAKNTWRLVFR) are intravirion. Residues 27 to 47 (IAILLSTVVTLAISAAALAYS) form a helical membrane-spanning segment. Residues 48–616 (MEASTPSDLV…ELESYAASWP (569 aa)) lie on the Virion surface side of the membrane. N-linked (GlcNAc...) asparagine; by host glycosylation is present at N119. The tract at residues 124-152 (GAPIHDPDYIGGIGKELIVDDASDVTSYY) is important for interaction with fusion/F protein. 3 disulfide bridges follow: C172–C196, C186–C247, and C238–C251. Residues 234–239 (NRKSCS) are involved in neuraminidase activity. N-linked (GlcNAc...) asparagine; by host glycosylation is found at N341 and N433. Intrachain disulfides connect C344-C461 and C455-C465. N-linked (GlcNAc...) asparagine; by host glycosylation is found at N481, N538, and N600. C531 and C542 are joined by a disulfide.

This sequence belongs to the paramyxoviruses hemagglutinin-neuraminidase family. As to quaternary structure, homotetramer; composed of disulfide-linked homodimers. Interacts with F protein trimer. Interacts with host CG-1B; this interaction inhibits viral adsorption and replication rather than internalization.

The protein localises to the virion membrane. It localises to the host cell membrane. The enzyme catalyses Hydrolysis of alpha-(2-&gt;3)-, alpha-(2-&gt;6)-, alpha-(2-&gt;8)- glycosidic linkages of terminal sialic acid residues in oligosaccharides, glycoproteins, glycolipids, colominic acid and synthetic substrates.. Functionally, mediates the viral entry into the host cell together with fusion/F protein. Attaches the virus to sialic acid-containing cell receptors and thereby initiates infection. Binding of HN protein to the receptor induces a conformational change that allows the F protein to trigger virion/cell membranes fusion. In terms of biological role, neuraminidase activity ensures the efficient spread of the virus by dissociating the mature virions from the neuraminic acid containing glycoproteins. The polypeptide is Hemagglutinin-neuraminidase (HN) (Newcastle disease virus (strain Queensland/66) (NDV)).